Consider the following 281-residue polypeptide: Large ribosomal subunit protein uL2 (281 aa).

The tract at residues arginine 213–lysine 281 is disordered.

It belongs to the universal ribosomal protein uL2 family. Part of the 50S ribosomal subunit. Forms a bridge to the 30S subunit in the 70S ribosome.

In terms of biological role, one of the primary rRNA binding proteins. Required for association of the 30S and 50S subunits to form the 70S ribosome, for tRNA binding and peptide bond formation. It has been suggested to have peptidyltransferase activity; this is somewhat controversial. Makes several contacts with the 16S rRNA in the 70S ribosome. This Mycoplasmopsis pulmonis (strain UAB CTIP) (Mycoplasma pulmonis) protein is Large ribosomal subunit protein uL2.